Reading from the N-terminus, the 547-residue chain is NXPE family member 1 (547 aa).

The N-terminal stretch at 1-21 is a signal peptide; it reads MSSNTMLQKTLLILISFSVVT. N-linked (GlcNAc...) asparagine glycosylation is found at Asn-39 and Asn-211.

The protein belongs to the NXPE family.

It localises to the secreted. In Homo sapiens (Human), this protein is NXPE family member 1 (NXPE1).